The sequence spans 101 residues: Small ribosomal subunit protein uS14 (101 aa).

This sequence belongs to the universal ribosomal protein uS14 family. In terms of assembly, part of the 30S ribosomal subunit. Contacts proteins S3 and S10.

Functionally, binds 16S rRNA, required for the assembly of 30S particles and may also be responsible for determining the conformation of the 16S rRNA at the A site. The polypeptide is Small ribosomal subunit protein uS14 (Cereibacter sphaeroides (strain ATCC 17029 / ATH 2.4.9) (Rhodobacter sphaeroides)).